We begin with the raw amino-acid sequence, 427 residues long: Acetyl-CoA acetyltransferase, mitochondrial (427 aa).

A mitochondrion-targeting transit peptide spans 1–33 (MAVLAALLRGGARSRSPLLRRLVQEIRYVERSY). N6-acetyllysine; alternate is present on Lys66. Residue Lys66 is modified to N6-succinyllysine; alternate. N6-succinyllysine is present on Lys78. The active-site Acyl-thioester intermediate is the Cys126. N6-acetyllysine; alternate occurs at positions 174, 181, 190, and 202. Residues Lys174, Lys181, Lys190, and Lys202 each carry the N6-succinyllysine; alternate modification. Residue Tyr219 coordinates CoA. Tyr219 contributes to the K(+) binding site. Lys223 and Lys230 each carry N6-acetyllysine; alternate. N6-succinyllysine; alternate is present on residues Lys223 and Lys230. The residue at position 243 (Lys243) is an N6-succinyllysine. N6-acetyllysine is present on residues Lys251 and Lys257. Residues 258 to 260 (RVD) and Lys263 each bind CoA. At Lys263 the chain carries N6-acetyllysine; alternate. N6-succinyllysine; alternate is present on Lys263. N6-succinyllysine is present on residues Lys266 and Lys268. Residue Lys273 is modified to N6-acetyllysine. K(+) is bound by residues Ala280, Ala281, and Ala283. Position 284 (Ser284) interacts with CoA. At Lys338 the chain carries N6-acetyllysine. Val381 provides a ligand contact to K(+). Cys413 acts as the Proton donor/acceptor in catalysis.

It belongs to the thiolase-like superfamily. Thiolase family. In terms of assembly, homotetramer. Post-translationally, succinylation at Lys-268, adjacent to a coenzyme A binding site. Desuccinylated by SIRT5.

It is found in the mitochondrion. The enzyme catalyses 2 acetyl-CoA = acetoacetyl-CoA + CoA. It carries out the reaction propanoyl-CoA + acetyl-CoA = 2-methyl-3-oxobutanoyl-CoA + CoA. It participates in lipid metabolism; fatty acid beta-oxidation. With respect to regulation, activated by potassium ions, but not sodium ions. This is one of the enzymes that catalyzes the last step of the mitochondrial beta-oxidation pathway, an aerobic process breaking down fatty acids into acetyl-CoA. Using free coenzyme A/CoA, catalyzes the thiolytic cleavage of medium- to long-chain 3-oxoacyl-CoAs into acetyl-CoA and a fatty acyl-CoA shortened by two carbon atoms. The activity of the enzyme is reversible and it can also catalyze the condensation of two acetyl-CoA molecules into acetoacetyl-CoA. Thereby, it plays a major role in ketone body metabolism. In Macaca fascicularis (Crab-eating macaque), this protein is Acetyl-CoA acetyltransferase, mitochondrial (ACAT1).